Here is a 348-residue protein sequence, read N- to C-terminus: Nuclear receptor subfamily 1 group I member 3 (348 aa).

Positions 8-83 (PRSCMVCGDR…AGMKKEMILS (76 aa)) form a DNA-binding region, nuclear receptor. Residues 11 to 31 (CMVCGDRATGYHFHALTCEGC) form an NR C4-type zinc finger. A Phosphothreonine; by PKC modification is found at T38. The segment at 47 to 71 (CPFAGNCKVNKAQRRHCPACRLQKC) adopts an NR C4-type zinc-finger fold. One can recognise an NR LBD domain in the interval 109-348 (GQQELVQTLL…MMPLLQEICS (240 aa)).

This sequence belongs to the nuclear hormone receptor family. NR1 subfamily. As to quaternary structure, heterodimer of NR1I3 and RXR. Interacts with PSMC4. Interacts with ECT2. Directly interacts with DNAJC7; this complex may also include HSP90. Interacts with CRY1. Interacts with CRY2 in a ligand-dependent manner. Post-translationally, phosphorylated at Thr-38 by PKC, dephosphorylation of Thr-38 is required for nuclear translocation and activation.

It localises to the nucleus. The protein localises to the cytoplasm. It is found in the cytoskeleton. In terms of biological role, binds and transactivates the retinoic acid response elements that control expression of the retinoic acid receptor beta 2 and alcohol dehydrogenase 3 genes. Transactivates both the phenobarbital responsive element module of the human CYP2B6 gene and the CYP3A4 xenobiotic response element. This Callorhinus ursinus (Northern fur seal) protein is Nuclear receptor subfamily 1 group I member 3 (NR1I3).